We begin with the raw amino-acid sequence, 94 residues long: Prepro-gonadotropin-releasing hormone-like protein (94 aa).

An N-terminal signal peptide occupies residues 1–21; that stretch reads MNACILLTTLVTMITIEKVQG.

The protein resides in the secreted. Functionally, neuropeptide involved in reproduction. May be an important hormone in the regulation of gonadal maturation. The protein is Prepro-gonadotropin-releasing hormone-like protein of Ruditapes philippinarum (Japanese carpet shell).